The sequence spans 388 residues: Succinyl-diaminopimelate desuccinylase (388 aa).

His84 provides a ligand contact to Zn(2+). Residue Asp86 is part of the active site. Asp115 provides a ligand contact to Zn(2+). Catalysis depends on Glu146, which acts as the Proton acceptor. The Zn(2+) site is built by Glu147, Glu175, and His360.

The protein belongs to the peptidase M20A family. DapE subfamily. In terms of assembly, homodimer. The cofactor is Zn(2+). It depends on Co(2+) as a cofactor.

The enzyme catalyses N-succinyl-(2S,6S)-2,6-diaminopimelate + H2O = (2S,6S)-2,6-diaminopimelate + succinate. The protein operates within amino-acid biosynthesis; L-lysine biosynthesis via DAP pathway; LL-2,6-diaminopimelate from (S)-tetrahydrodipicolinate (succinylase route): step 3/3. In terms of biological role, catalyzes the hydrolysis of N-succinyl-L,L-diaminopimelic acid (SDAP), forming succinate and LL-2,6-diaminopimelate (DAP), an intermediate involved in the bacterial biosynthesis of lysine and meso-diaminopimelic acid, an essential component of bacterial cell walls. This Helicobacter pylori (strain J99 / ATCC 700824) (Campylobacter pylori J99) protein is Succinyl-diaminopimelate desuccinylase.